A 210-amino-acid chain; its full sequence is Thymidylate kinase (210 aa).

11–18 (GVDGAGKT) is a binding site for ATP.

The protein belongs to the thymidylate kinase family.

It carries out the reaction dTMP + ATP = dTDP + ADP. In terms of biological role, phosphorylation of dTMP to form dTDP in both de novo and salvage pathways of dTTP synthesis. The sequence is that of Thymidylate kinase (tmk) from Mycoplasma pneumoniae (strain ATCC 29342 / M129 / Subtype 1) (Mycoplasmoides pneumoniae).